A 320-amino-acid chain; its full sequence is MIFSTLEHILTHISFSIVSIVITIHLITLLVDEIIKLYDSSEKGMIAIFLCITGLLVTRWIYSRHFPLSDLYESLIFLSWSLSVIHIVPYFKKKKKNLSTITASSVIFTQGFATSGLLTEIHQSAILVPALQSEWLIMHVSMMILSYAALLCGSLLSVALLVITFRKNRNIFCKRNPLLNELFSFGEIQYMNERNNVLRTTFFSAKNYYRSQLIQQLDYWSYRVISLGFIFLTIGILSGAVWANEAWGSYWNWDPKETWAFITWIVFAIYLHTRTNIKLRGANSAIVASIGFLIIWICYFGVNLLGIGLHSYGSFTLTSN.

8 helical membrane passes run 15-35, 43-63, 71-91, 98-118, 143-163, 224-244, 251-271, and 285-305; these read FSIV…DEII, KGMI…WIYS, LYES…VPYF, LSTI…SGLL, MILS…LLVI, VISL…VWAN, WNWD…AIYL, and AIVA…VNLL.

This sequence belongs to the CcmF/CycK/Ccl1/NrfE/CcsA family. In terms of assembly, may interact with Ccs1.

It localises to the plastid. Its subcellular location is the chloroplast thylakoid membrane. Its function is as follows. Required during biogenesis of c-type cytochromes (cytochrome c6 and cytochrome f) at the step of heme attachment. This is Cytochrome c biogenesis protein CcsA from Panax ginseng (Korean ginseng).